Consider the following 112-residue polypeptide: Protein preY, mitochondrial (112 aa).

The transit peptide at 1–34 (MLTTTCRRLSQALQRPHALSAVAQRCLRAPGARS) directs the protein to the mitochondrion. Residues 49–95 (HPALLQFLVCPLSKKPLRYDASTNELINDELGIAYPIIDGVPNMIPQ) form the TRM112 domain.

Belongs to the PREY family. As to quaternary structure, interacts (via TRM112 domain) with NDUFAF5; the interaction is direct and stabilizes NDUFAF5 protein. Interacts with COQ5; the interaction is direct, stabilizes COQ5 protein and associates PYURF with COQ enzyme complex.

Its subcellular location is the mitochondrion. In mitochondria, S-adenosylmethionine-dependent methyltransferase chaperone that supports both coenzyme Q biosynthesis, by stabilizing its components, such as COQ5, and NADH:ubiquinone oxidoreductase complex (complex I, MT-ND1) assembly, by stabilizing complex I assembly factors, such as NDUFAF5. This chain is Protein preY, mitochondrial (Pyurf), found in Rattus norvegicus (Rat).